A 396-amino-acid polypeptide reads, in one-letter code: Tryptophan synthase beta chain (396 aa).

K86 bears the N6-(pyridoxal phosphate)lysine mark.

The protein belongs to the TrpB family. Tetramer of two alpha and two beta chains. Pyridoxal 5'-phosphate serves as cofactor.

The enzyme catalyses (1S,2R)-1-C-(indol-3-yl)glycerol 3-phosphate + L-serine = D-glyceraldehyde 3-phosphate + L-tryptophan + H2O. It participates in amino-acid biosynthesis; L-tryptophan biosynthesis; L-tryptophan from chorismate: step 5/5. Functionally, the beta subunit is responsible for the synthesis of L-tryptophan from indole and L-serine. This Blochmanniella pennsylvanica (strain BPEN) protein is Tryptophan synthase beta chain.